A 391-amino-acid polypeptide reads, in one-letter code: Multidrug resistance protein MdtL (391 aa).

The next 12 membrane-spanning stretches (helical) occupy residues 4 to 24 (FLIC…MYLV), 42 to 62 (IAFS…GKVA), 69 to 89 (PVAI…SLAE), 93 to 113 (LFLA…VVAF), 131 to 151 (LLNG…HLIM), 158 to 178 (SLFW…LFIL), 203 to 222 (FFLS…LTFV), 245 to 265 (ALTA…LGIF), 269 to 289 (TLMI…AVSP), 293 to 313 (VSLF…GVAM), 331 to 351 (LGIA…VVGI), and 356 to 376 (MLIG…MFVA).

This sequence belongs to the major facilitator superfamily. DHA1 family. MdtL (TC 2.A.1.2.22) subfamily.

Its subcellular location is the cell inner membrane. Its function is as follows. Confers resistance to chloramphenicol. In Escherichia coli O139:H28 (strain E24377A / ETEC), this protein is Multidrug resistance protein MdtL.